Reading from the N-terminus, the 159-residue chain is Ribosomal RNA large subunit methyltransferase H (159 aa).

S-adenosyl-L-methionine contacts are provided by residues leucine 76, glycine 108, and 127-132 (FGKLTM).

It belongs to the RNA methyltransferase RlmH family. In terms of assembly, homodimer.

The protein resides in the cytoplasm. The enzyme catalyses pseudouridine(1915) in 23S rRNA + S-adenosyl-L-methionine = N(3)-methylpseudouridine(1915) in 23S rRNA + S-adenosyl-L-homocysteine + H(+). Functionally, specifically methylates the pseudouridine at position 1915 (m3Psi1915) in 23S rRNA. The chain is Ribosomal RNA large subunit methyltransferase H from Lactobacillus delbrueckii subsp. bulgaricus (strain ATCC 11842 / DSM 20081 / BCRC 10696 / JCM 1002 / NBRC 13953 / NCIMB 11778 / NCTC 12712 / WDCM 00102 / Lb 14).